The chain runs to 136 residues: uncharacterized protein (136 aa).

This is an uncharacterized protein from Pseudomonas amygdali pv. tabaci (Pseudomonas syringae pv. tabaci).